We begin with the raw amino-acid sequence, 190 residues long: Large ribosomal subunit protein bL25 (190 aa).

It belongs to the bacterial ribosomal protein bL25 family. CTC subfamily. Part of the 50S ribosomal subunit; part of the 5S rRNA/L5/L18/L25 subcomplex. Contacts the 5S rRNA. Binds to the 5S rRNA independently of L5 and L18.

Its function is as follows. This is one of the proteins that binds to the 5S RNA in the ribosome where it forms part of the central protuberance. This is Large ribosomal subunit protein bL25 from Neisseria meningitidis serogroup C / serotype 2a (strain ATCC 700532 / DSM 15464 / FAM18).